A 315-amino-acid chain; its full sequence is Ferrochelatase (315 aa).

Residues H193 and E273 each coordinate Fe cation.

The protein belongs to the ferrochelatase family.

The protein localises to the cytoplasm. It catalyses the reaction heme b + 2 H(+) = protoporphyrin IX + Fe(2+). The protein operates within porphyrin-containing compound metabolism; protoheme biosynthesis; protoheme from protoporphyrin-IX: step 1/1. In terms of biological role, catalyzes the ferrous insertion into protoporphyrin IX. The chain is Ferrochelatase from Wolbachia pipientis wMel.